We begin with the raw amino-acid sequence, 85 residues long: CRISPR-associated endoribonuclease Cas2 (85 aa).

Asp8 contributes to the Mg(2+) binding site.

It belongs to the CRISPR-associated endoribonuclease Cas2 protein family. In terms of assembly, homodimer, forms a heterotetramer with a Cas1 homodimer. It depends on Mg(2+) as a cofactor.

CRISPR (clustered regularly interspaced short palindromic repeat), is an adaptive immune system that provides protection against mobile genetic elements (viruses, transposable elements and conjugative plasmids). CRISPR clusters contain sequences complementary to antecedent mobile elements and target invading nucleic acids. CRISPR clusters are transcribed and processed into CRISPR RNA (crRNA). Functions as a ssRNA-specific endoribonuclease. Involved in the integration of spacer DNA into the CRISPR cassette. This is CRISPR-associated endoribonuclease Cas2 from Thermococcus kodakarensis (strain ATCC BAA-918 / JCM 12380 / KOD1) (Pyrococcus kodakaraensis (strain KOD1)).